The chain runs to 388 residues: Succinate--CoA ligase [ADP-forming] subunit beta (388 aa).

Residues 9-244 enclose the ATP-grasp domain; the sequence is KQLFARYGLP…PSQEDSREAH (236 aa). ATP is bound by residues Lys46, 53 to 55, Glu99, Thr102, and Glu107; that span reads GRG. 2 residues coordinate Mg(2+): Asn199 and Asp213. Residues Asn264 and 321–323 contribute to the substrate site; that span reads GIV.

Belongs to the succinate/malate CoA ligase beta subunit family. In terms of assembly, heterotetramer of two alpha and two beta subunits. Mg(2+) is required as a cofactor.

It catalyses the reaction succinate + ATP + CoA = succinyl-CoA + ADP + phosphate. The catalysed reaction is GTP + succinate + CoA = succinyl-CoA + GDP + phosphate. It functions in the pathway carbohydrate metabolism; tricarboxylic acid cycle; succinate from succinyl-CoA (ligase route): step 1/1. Succinyl-CoA synthetase functions in the citric acid cycle (TCA), coupling the hydrolysis of succinyl-CoA to the synthesis of either ATP or GTP and thus represents the only step of substrate-level phosphorylation in the TCA. The beta subunit provides nucleotide specificity of the enzyme and binds the substrate succinate, while the binding sites for coenzyme A and phosphate are found in the alpha subunit. This is Succinate--CoA ligase [ADP-forming] subunit beta from Pectobacterium atrosepticum (strain SCRI 1043 / ATCC BAA-672) (Erwinia carotovora subsp. atroseptica).